Reading from the N-terminus, the 223-residue chain is Urease accessory protein UreF (223 aa).

It belongs to the UreF family. UreD, UreF and UreG form a complex that acts as a GTP-hydrolysis-dependent molecular chaperone, activating the urease apoprotein by helping to assemble the nickel containing metallocenter of UreC. The UreE protein probably delivers the nickel.

Its subcellular location is the cytoplasm. Its function is as follows. Required for maturation of urease via the functional incorporation of the urease nickel metallocenter. The protein is Urease accessory protein UreF of Sinorhizobium medicae (strain WSM419) (Ensifer medicae).